Here is a 190-residue protein sequence, read N- to C-terminus: uncharacterized protein (190 aa).

The Macro domain maps to Met-1–Asp-185.

This is an uncharacterized protein from Pyrococcus horikoshii (strain ATCC 700860 / DSM 12428 / JCM 9974 / NBRC 100139 / OT-3).